Reading from the N-terminus, the 85-residue chain is Large ribosomal subunit protein bL31B (85 aa).

This sequence belongs to the bacterial ribosomal protein bL31 family. Type B subfamily. Part of the 50S ribosomal subunit.

This Macrococcus caseolyticus (strain JCSC5402) (Macrococcoides caseolyticum) protein is Large ribosomal subunit protein bL31B.